A 2090-amino-acid chain; its full sequence is Nuclear pore complex protein Nup205 (2090 aa).

Belongs to the NUP186/NUP192/NUP205 family. Part of the nuclear pore complex (NPC).

The protein resides in the nucleus. The protein localises to the nuclear pore complex. In terms of biological role, plays a role in the nuclear pore complex (NPC) assembly and maintenance, but with limited role in NPC permeability. Required for specific nuclear import pathways such as Mad import. The chain is Nuclear pore complex protein Nup205 from Drosophila melanogaster (Fruit fly).